The sequence spans 101 residues: Small ribosomal subunit protein uS14A (101 aa).

Belongs to the universal ribosomal protein uS14 family. Part of the 30S ribosomal subunit. Contacts proteins S3 and S10.

In terms of biological role, binds 16S rRNA, required for the assembly of 30S particles and may also be responsible for determining the conformation of the 16S rRNA at the A site. The sequence is that of Small ribosomal subunit protein uS14A from Salinispora tropica (strain ATCC BAA-916 / DSM 44818 / JCM 13857 / NBRC 105044 / CNB-440).